Here is a 537-residue protein sequence, read N- to C-terminus: CTP synthase (537 aa).

Residues M1–L268 are amidoligase domain. S14 lines the CTP pocket. S14 provides a ligand contact to UTP. S15–L20 is an ATP binding site. Y55 serves as a coordination point for L-glutamine. D72 is an ATP binding site. D72 and E142 together coordinate Mg(2+). CTP-binding positions include D149–E151, K188–Q193, and K224. Residues K188–Q193 and K224 contribute to the UTP site. One can recognise a Glutamine amidotransferase type-1 domain in the interval R294–N533. An L-glutamine-binding site is contributed by G353. The active-site Nucleophile; for glutamine hydrolysis is C380. Residues L381–Q384, E404, and R461 each bind L-glutamine. Catalysis depends on residues H506 and E508.

This sequence belongs to the CTP synthase family. In terms of assembly, homotetramer.

It carries out the reaction UTP + L-glutamine + ATP + H2O = CTP + L-glutamate + ADP + phosphate + 2 H(+). The catalysed reaction is L-glutamine + H2O = L-glutamate + NH4(+). The enzyme catalyses UTP + NH4(+) + ATP = CTP + ADP + phosphate + 2 H(+). Its pathway is pyrimidine metabolism; CTP biosynthesis via de novo pathway; CTP from UDP: step 2/2. Allosterically activated by GTP, when glutamine is the substrate; GTP has no effect on the reaction when ammonia is the substrate. The allosteric effector GTP functions by stabilizing the protein conformation that binds the tetrahedral intermediate(s) formed during glutamine hydrolysis. Inhibited by the product CTP, via allosteric rather than competitive inhibition. Functionally, catalyzes the ATP-dependent amination of UTP to CTP with either L-glutamine or ammonia as the source of nitrogen. Regulates intracellular CTP levels through interactions with the four ribonucleotide triphosphates. This chain is CTP synthase, found in Chlamydia abortus (strain DSM 27085 / S26/3) (Chlamydophila abortus).